The chain runs to 98 residues: NADH-ubiquinone oxidoreductase chain 4L (98 aa).

3 helical membrane-spanning segments follow: residues 1–21 (MHYI…GALL), 29–49 (SLLC…LIAL), and 61–81 (IILL…LVMV).

This sequence belongs to the complex I subunit 4L family. Core subunit of respiratory chain NADH dehydrogenase (Complex I) which is composed of 45 different subunits.

The protein localises to the mitochondrion inner membrane. The enzyme catalyses a ubiquinone + NADH + 5 H(+)(in) = a ubiquinol + NAD(+) + 4 H(+)(out). Its function is as follows. Core subunit of the mitochondrial membrane respiratory chain NADH dehydrogenase (Complex I) which catalyzes electron transfer from NADH through the respiratory chain, using ubiquinone as an electron acceptor. Part of the enzyme membrane arm which is embedded in the lipid bilayer and involved in proton translocation. This chain is NADH-ubiquinone oxidoreductase chain 4L (MT-ND4L), found in Procavia capensis (Rock hyrax).